The chain runs to 55 residues: Cytochrome c oxidase subunit 7s (55 aa).

The chain crosses the membrane as a helical span at residues 13-35 (LVQDIGVALILGSIAGCFFKYGV).

In terms of assembly, slime mold cytochrome c oxidase consists of at least seven different polypeptides species, subunits I, II, III, IV, V, VI, and VIIe/s in order of MW.

It is found in the mitochondrion inner membrane. The catalysed reaction is 4 Fe(II)-[cytochrome c] + O2 + 8 H(+)(in) = 4 Fe(III)-[cytochrome c] + 2 H2O + 4 H(+)(out). This protein is one of the nuclear-coded polypeptide chains of cytochrome c oxidase, the terminal oxidase in mitochondrial electron transport. This chain is Cytochrome c oxidase subunit 7s (cxgS), found in Dictyostelium discoideum (Social amoeba).